A 270-amino-acid polypeptide reads, in one-letter code: Urease accessory protein UreD (270 aa).

It belongs to the UreD family. In terms of assembly, ureD, UreF and UreG form a complex that acts as a GTP-hydrolysis-dependent molecular chaperone, activating the urease apoprotein by helping to assemble the nickel containing metallocenter of UreC. The UreE protein probably delivers the nickel.

The protein localises to the cytoplasm. Required for maturation of urease via the functional incorporation of the urease nickel metallocenter. This is Urease accessory protein UreD from Synechocystis sp. (strain ATCC 27184 / PCC 6803 / Kazusa).